Here is a 437-residue protein sequence, read N- to C-terminus: Aspartic proteinase nepenthesin-1 (437 aa).

A signal peptide spans 1-24 (MASSLYSFLLALSIVYIFVAPTHS). The propeptide at 25 to 78 (TSRTALNHRHEAKVTGFQIMLEHVDSGKNLTKFQLLERAIERGSRRLQRLEAML) is activation peptide. N-linked (GlcNAc...) asparagine glycosylation is found at asparagine 53 and asparagine 98. In terms of domain architecture, Peptidase A1 spans 95 to 430 (YLMNLSIGTP…DTGNSVVSFA (336 aa)). Aspartate 113 is a catalytic residue. 6 cysteine pairs are disulfide-bonded: cysteine 123/cysteine 126, cysteine 129/cysteine 203, cysteine 150/cysteine 168, cysteine 155/cysteine 163, cysteine 240/cysteine 434, and cysteine 354/cysteine 395. Residue asparagine 131 is glycosylated (N-linked (GlcNAc...) asparagine). N-linked (GlcNAc...) asparagine glycans are attached at residues asparagine 198, asparagine 267, and asparagine 307. Residue aspartate 315 is part of the active site. N-linked (GlcNAc...) asparagine glycosylation is present at asparagine 345.

This sequence belongs to the peptidase A1 family.

It localises to the secreted. It catalyses the reaction Similar to pepsin, but also cleaves on either side of Asp and at Lys-|-Arg.. Its activity is regulated as follows. Inhibited by pepstatin and by diazoacetyl-D,L-norleucine methyl ester (DAN) in the presence of Cu(2+) ions. Functionally, extracellular proteinase found in the pitcher fluid of carnivorous plants. Digest prey for nitrogen uptake. This chain is Aspartic proteinase nepenthesin-1 (nep1), found in Nepenthes gracilis (Slender pitcher plant).